We begin with the raw amino-acid sequence, 440 residues long: UDP-N-acetylmuramoylalanine--D-glutamate ligase (440 aa).

Residue 115–121 (GSNGKST) coordinates ATP.

Belongs to the MurCDEF family.

The protein resides in the cytoplasm. It catalyses the reaction UDP-N-acetyl-alpha-D-muramoyl-L-alanine + D-glutamate + ATP = UDP-N-acetyl-alpha-D-muramoyl-L-alanyl-D-glutamate + ADP + phosphate + H(+). Its pathway is cell wall biogenesis; peptidoglycan biosynthesis. In terms of biological role, cell wall formation. Catalyzes the addition of glutamate to the nucleotide precursor UDP-N-acetylmuramoyl-L-alanine (UMA). The sequence is that of UDP-N-acetylmuramoylalanine--D-glutamate ligase from Aliivibrio fischeri (strain MJ11) (Vibrio fischeri).